Here is a 610-residue protein sequence, read N- to C-terminus: Ectonucleoside triphosphate diphosphohydrolase 7 (610 aa).

Topologically, residues 1–28 (MARISFSCLFPASWHCSLPSVTQFSRQR) are cytoplasmic. The helical transmembrane segment at 29–49 (VALLIISVAVFILVFAAVADL) threads the bilayer. The Vesicular portion of the chain corresponds to 50-555 (QLWSSRAFRD…VSWFRISFVY (506 aa)). Glu217 (proton acceptor) is an active-site residue. 2 N-linked (GlcNAc...) asparagine glycosylation sites follow: Asn336 and Asn400. Cys454 and Cys483 are joined by a disulfide. The helical transmembrane segment at 556-576 (NHYLFFACILVVLLSIVLYIL) threads the bilayer. At 577–610 (RLRRIHRRQARASALDLLLMEEGVHTVLEPGIPT) the chain is on the cytoplasmic side.

The protein belongs to the GDA1/CD39 NTPase family. Requires Ca(2+) as cofactor. The cofactor is Mg(2+).

Its subcellular location is the cytoplasmic vesicle membrane. It catalyses the reaction a ribonucleoside 5'-triphosphate + H2O = a ribonucleoside 5'-diphosphate + phosphate + H(+). The catalysed reaction is UTP + H2O = UDP + phosphate + H(+). It carries out the reaction GTP + H2O = GDP + phosphate + H(+). The enzyme catalyses CTP + H2O = CDP + phosphate + H(+). Its function is as follows. Catalyzes the hydrolysis of nucleoside triphosphates and diphosphates in a calcium- or magnesium-dependent manner. Preferentially hydrolyzes nucleoside 5'-triphosphates, with substrate preference for UTP &gt; GTP &gt; CTP. Hydrolyzes ATP and nucleoside diphosphates only to a minor extent. The protein is Ectonucleoside triphosphate diphosphohydrolase 7 (entpd7) of Xenopus tropicalis (Western clawed frog).